Consider the following 519-residue polypeptide: Cytochrome P450 88A1 (519 aa).

The helical transmembrane segment at Met1–Asp21 threads the bilayer. Heme is bound at residue Cys466.

It belongs to the cytochrome P450 family. Requires heme as cofactor. As to expression, expressed in roots, developing leaves, the vegetative meristem, and suspension culture cells.

The protein resides in the membrane. It functions in the pathway plant hormone biosynthesis; gibberellin biosynthesis. The sequence is that of Cytochrome P450 88A1 (CYP88A1) from Zea mays (Maize).